Here is a 496-residue protein sequence, read N- to C-terminus: Adenosylhomocysteinase (496 aa).

Threonine 68, aspartate 157, and glutamate 219 together coordinate substrate. An NAD(+)-binding site is contributed by 220–222 (TTT). Substrate contacts are provided by lysine 249 and aspartate 253. Residues asparagine 254, 283–288 (GYGDVG), glutamate 306, asparagine 341, 362–364 (IGH), and asparagine 410 contribute to the NAD(+) site.

This sequence belongs to the adenosylhomocysteinase family. Requires NAD(+) as cofactor.

The protein localises to the cytoplasm. The enzyme catalyses S-adenosyl-L-homocysteine + H2O = L-homocysteine + adenosine. It functions in the pathway amino-acid biosynthesis; L-homocysteine biosynthesis; L-homocysteine from S-adenosyl-L-homocysteine: step 1/1. In terms of biological role, may play a key role in the regulation of the intracellular concentration of adenosylhomocysteine. The chain is Adenosylhomocysteinase from Mycolicibacterium paratuberculosis (strain ATCC BAA-968 / K-10) (Mycobacterium paratuberculosis).